Reading from the N-terminus, the 141-residue chain is Large ribosomal subunit protein uL14m (141 aa).

The N-terminal 19 residues, 1-19 (MALSLSGLILPKLMQQRAF), are a transit peptide targeting the mitochondrion.

Belongs to the universal ribosomal protein uL14 family. As to quaternary structure, component of the mitochondrial ribosome large subunit (39S) which comprises a 16S rRNA and about 50 distinct proteins. Interacts with MALSU1.

Its subcellular location is the mitochondrion. In terms of biological role, may form part of 2 intersubunit bridges in the assembled ribosome. Upon binding to MALSU1, intersubunit bridge formation is blocked, preventing ribosome formation and repressing translation. This is Large ribosomal subunit protein uL14m (mrpl14) from Danio rerio (Zebrafish).